We begin with the raw amino-acid sequence, 201 residues long: Recombination protein RecR (201 aa).

The C4-type zinc finger occupies 60-75 (CSCCGNVDTSDPCTIC). The 96-residue stretch at 83–178 (ATLIVVEDVS…RVTRLAHGVP (96 aa)) folds into the Toprim domain.

It belongs to the RecR family.

Its function is as follows. May play a role in DNA repair. It seems to be involved in an RecBC-independent recombinational process of DNA repair. It may act with RecF and RecO. The polypeptide is Recombination protein RecR (Brucella melitensis biotype 1 (strain ATCC 23456 / CCUG 17765 / NCTC 10094 / 16M)).